We begin with the raw amino-acid sequence, 618 residues long: Phostensin (618 aa).

The segment covering 15–33 (RRQEEAAVRGREKAERERL) has biased composition (basic and acidic residues). The interval 15-505 (RRQEEAAVRG…PATADAAVPG (491 aa)) is disordered. Phosphoserine is present on S54. Residues 96 to 109 (QQQQQQQQQQQQQQ) show a composition bias toward low complexity. Basic and acidic residues-rich tracts occupy residues 110-160 (RSEE…ERRL) and 173-197 (LESR…EVRK). Phosphoserine is present on residues S131, S139, S181, and S201. A Phosphothreonine modification is found at T205. S231 bears the Phosphoserine mark. Basic and acidic residues-rich tracts occupy residues 234–245 (DSDHEKLGLTDA) and 271–289 (SGEE…EERT). The segment covering 308–319 (EAAGSSSGGVEA) has biased composition (low complexity). A compositionally biased stretch (basic and acidic residues) spans 348-358 (KVRDRTPRDTE). Pro residues predominate over residues 429–451 (RPPPAAPLSPPPPAPPAPQPPGD). A Phosphoserine modification is found at S437. K462 carries the N6-acetyllysine modification. Residues 485–505 (APPAAAATPATPATADAAVPG) show a composition bias toward low complexity. S535 bears the Phosphoserine mark. Residues 556-594 (YQYPSESSVLEELGPEPEAPSAPSPPAAQPDDEEDEEEL) form a disordered region. Residues 572–583 (PEAPSAPSPPAA) are compositionally biased toward pro residues. The span at 585–594 (PDDEEDEEEL) shows a compositional bias: acidic residues.

Interacts with Protein phosphatase 1 (PP1).

It is found in the cytoplasm. Its subcellular location is the cytoskeleton. Functionally, may target protein phosphatase 1 to F-actin cytoskeleton. This chain is Phostensin (PPP1R18), found in Sus scrofa (Pig).